The sequence spans 445 residues: Methionine aminopeptidase 2-1 (445 aa).

Positions 1-99 (MAAQVPTEAL…FPNKAYPKGE (99 aa)) are disordered. Positions 61-75 (KKKKKRKPKKKKKHP) are enriched in basic residues. Substrate is bound at residue H198. A divalent metal cation contacts are provided by D218, D229, and H298. H306 serves as a coordination point for substrate. Residues E331 and E426 each contribute to the a divalent metal cation site.

This sequence belongs to the peptidase M24A family. Methionine aminopeptidase eukaryotic type 2 subfamily. Co(2+) serves as cofactor. It depends on Zn(2+) as a cofactor. Mn(2+) is required as a cofactor. The cofactor is Fe(2+).

Its subcellular location is the cytoplasm. It carries out the reaction Release of N-terminal amino acids, preferentially methionine, from peptides and arylamides.. Functionally, cotranslationally removes the N-terminal methionine from nascent proteins. The N-terminal methionine is often cleaved when the second residue in the primary sequence is small and uncharged (Met-Ala-, Cys, Gly, Pro, Ser, Thr, or Val). The sequence is that of Methionine aminopeptidase 2-1 from Fusarium vanettenii (strain ATCC MYA-4622 / CBS 123669 / FGSC 9596 / NRRL 45880 / 77-13-4) (Fusarium solani subsp. pisi).